Here is a 393-residue protein sequence, read N- to C-terminus: N-acyl-phosphatidylethanolamine-hydrolyzing phospholipase D (393 aa).

N-acetylmethionine is present on Met1. The segment covering 1–16 (MDENESNQSLMTSSQY) has biased composition (polar residues). Positions 1–40 (MDENESNQSLMTSSQYPKEAVRKRQNSARNSGASDSSRFS) are disordered. Zn(2+) is bound by residues His185 and His187. An N-acyl-1,2-diacyl-sn-glycero-3-phosphoethanolamine is bound at residue Tyr188. Zn(2+)-binding residues include Asp189, His190, and His253. Residues Lys256 and Met260 each contribute to the deoxycholate site. Asp284 serves as a coordination point for Zn(2+). His321 provides a ligand contact to an N-acyl-1,2-diacyl-sn-glycero-3-phosphoethanolamine. Residue His343 participates in Zn(2+) binding. Residue Ala348 coordinates deoxycholate.

Belongs to the NAPE-PLD family. As to quaternary structure, homodimer. Bile acids promote the assembly of inactive monomers into an active dimer and enable catalysis. The cofactor is Zn(2+). In terms of tissue distribution, widely expressed. Highest expression in brain, kidney and testis (at protein level). Expressed in adipose tissue (at protein level).

The protein resides in the golgi apparatus membrane. It is found in the early endosome membrane. The protein localises to the nucleus envelope. Its subcellular location is the nucleus. It localises to the nucleoplasm. The catalysed reaction is an N-acyl-1,2-diacyl-sn-glycero-3-phosphoethanolamine + H2O = an N-acylethanolamine + a 1,2-diacyl-sn-glycero-3-phosphate + H(+). It catalyses the reaction N-butanoyl-1-hexadecanoyl-2-(9Z,12Z-octadecadienoyl)-sn-glycero-3-phosphoethanolamine + H2O = N-butanoyl ethanolamine + 1-hexadecanoyl-2-(9Z,12Z-octadecadienoyl)-sn-glycero-3-phosphate + H(+). The enzyme catalyses N-hexanoyl-1-hexadecanoyl-2-(9Z,12Z-octadecadienoyl)-sn-glycero-3-phosphoethanolamine + H2O = N-hexanoyl ethanolamine + 1-hexadecanoyl-2-(9Z,12Z-octadecadienoyl)-sn-glycero-3-phosphate + H(+). It carries out the reaction N-octanoyl-1-hexadecanoyl-2-(9Z,12Z-octadecadienoyl)-sn-glycero-3-phosphoethanolamine + H2O = N-octanoyl ethanolamine + 1-hexadecanoyl-2-(9Z,12Z-octadecadienoyl)-sn-glycero-3-phosphate + H(+). The catalysed reaction is N-decanoyl-1-hexadecanoyl-2-(9Z,12Z-octadecadienoyl)-sn-glycero-3-phosphoethanolamine + H2O = N-decanoyl ethanolamine + 1-hexadecanoyl-2-(9Z,12Z-octadecadienoyl)-sn-glycero-3-phosphate + H(+). It catalyses the reaction N-dodecanoyl-1,2-di-(9Z-octadecenoyl)-sn-glycero-3-phosphoethanolamine + H2O = N-dodecanoylethanolamine + 1,2-di-(9Z-octadecenoyl)-sn-glycero-3-phosphate + H(+). The enzyme catalyses N-tetradecanoyl-1,2-di-(9Z-octadecenoyl)-sn-glycero-3-phosphoethanolamine + H2O = N-tetradecanoylethanolamine + 1,2-di-(9Z-octadecenoyl)-sn-glycero-3-phosphate + H(+). It carries out the reaction N-hexadecanoyl-1,2-di-(9Z-octadecenoyl)-sn-glycero-3-phosphoethanolamine + H2O = N-hexadecanoylethanolamine + 1,2-di-(9Z-octadecenoyl)-sn-glycero-3-phosphate + H(+). The catalysed reaction is N,1-dihexadecanoyl-2-(9Z,12Z-octadecadienoyl)-sn-glycero-3-phosphoethanolamine + H2O = 1-hexadecanoyl-2-(9Z,12Z-octadecadienoyl)-sn-glycero-3-phosphate + N-hexadecanoylethanolamine + H(+). It catalyses the reaction N-octadecanoyl-1,2-di-(9Z-octadecenoyl)-sn-glycero-3-phosphoethanolamine + H2O = N-octadecanoyl ethanolamine + 1,2-di-(9Z-octadecenoyl)-sn-glycero-3-phosphate + H(+). The enzyme catalyses N,1,2-tri-(9Z-octadecenoyl)-sn-glycero-3-phosphoethanolamine + H2O = N-(9Z-octadecenoyl) ethanolamine + 1,2-di-(9Z-octadecenoyl)-sn-glycero-3-phosphate + H(+). It carries out the reaction N-(5Z,8Z,11Z,14Z-eicosatetraenoyl)-1,2-diacyl-sn-glycero-3-phosphoethanolamine + H2O = N-(5Z,8Z,11Z,14Z-eicosatetraenoyl)-ethanolamine + a 1,2-diacyl-sn-glycero-3-phosphate + H(+). The catalysed reaction is N-(5Z,8Z,11Z,14Z-eicosatetraenoyl)-1,2-di-(9Z-octadecenoyl)-sn-glycero-3-phosphoethanolamine + H2O = N-(5Z,8Z,11Z,14Z-eicosatetraenoyl)-ethanolamine + 1,2-di-(9Z-octadecenoyl)-sn-glycero-3-phosphate + H(+). It catalyses the reaction 1-O-(1Z-octadecenoyl)-2-(9Z-octadecenoyl)-sn-glycero-3-phospho-N-hexadecanoyl-ethanolamine + H2O = 1-O-(1Z-octadecenoyl)-2-(9Z-octadecenoyl)-sn-glycero-3-phosphate + N-hexadecanoylethanolamine + H(+). The enzyme catalyses N,1-diacyl-sn-glycero-3-phosphoethanolamine + H2O = an N-acylethanolamine + a 1-acyl-sn-glycero-3-phosphate + H(+). It carries out the reaction N,1-dihexadecanoyl-sn-glycero-3-phosphoethanolamine + H2O = N-hexadecanoylethanolamine + 1-hexadecanoyl-sn-glycero-3-phosphate + H(+). The catalysed reaction is N-(5Z,8Z,11Z,14Z-eicosatetraenoyl)-1-(9Z-octadecenoyl)-sn-glycero-3-phosphoethanolamine + H2O = N-(5Z,8Z,11Z,14Z-eicosatetraenoyl)-ethanolamine + 1-(9Z-octadecenoyl)-sn-glycero-3-phosphate + H(+). Its activity is regulated as follows. Activated by divalent cations. Activated by bile acids and their conjugates, except for lithocholic acid which is rather inhibitory. Binding of deoxycholic acid favors the selective release of anandamide and likely other unsatured long FAEs. Inhibited by phosphatidylethanolamines. D-type phospholipase that hydrolyzes N-acyl-phosphatidylethanolamines (NAPEs) to produce bioactive N-acylethanolamines/fatty acid ethanolamides (NAEs/FAEs) and phosphatidic acid. Cleaves the terminal phosphodiester bond of diacyl- and alkenylacyl-NAPEs, primarily playing a role in the generation of long-chain saturated and monounsaturated NAEs in the brain. May control NAPE homeostasis in dopaminergic neuron membranes and regulate neuron survival, partly through RAC1 activation. As a regulator of lipid metabolism in the adipose tissue, mediates the crosstalk between adipocytes, gut microbiota and immune cells to control body temperature and weight. In particular, regulates energy homeostasis by promoting cold-induced brown or beige adipocyte differentiation program to generate heat from fatty acids and glucose. Has limited D-type phospholipase activity toward N-acyl lyso-NAPEs. The chain is N-acyl-phosphatidylethanolamine-hydrolyzing phospholipase D (NAPEPLD) from Homo sapiens (Human).